A 340-amino-acid polypeptide reads, in one-letter code: Protein S-acyltransferase 10 (340 aa).

2 consecutive transmembrane segments (helical) span residues 34–54 (LLLK…LFLF) and 66–86 (PWYM…YFVT). One can recognise a DHHC domain in the interval 162-212 (LTCGYCHVEQPPRTKHCHDCDRCVLQFDHHCVWLGTCIGQKNHSKFWWYIC). The S-palmitoyl cysteine intermediate role is filled by cysteine 192. The next 2 helical transmembrane spans lie at 207 to 227 (FWWY…MYVD) and 241 to 261 (IIIL…LLLI).

The protein belongs to the DHHC palmitoyltransferase family. In terms of tissue distribution, expressed in mature embryos, embryo sacs, cotyledons, whole seedlings, hydathodes, guard cells, sites of lateral root initiation, root tips and phloem, but not in xylem.

It is found in the vacuole membrane. It catalyses the reaction L-cysteinyl-[protein] + hexadecanoyl-CoA = S-hexadecanoyl-L-cysteinyl-[protein] + CoA. Its function is as follows. S-acyltransferase involved in protein lipid modification. Catalyzes the palmitoylation of proteins peripheral or integral to the tonoplast. Required for the tonoplast localization of CBL2, CBL3 and CBL6, but not for the plasma membrane localization of CBL9, for the endosome localization of RABF1 or for the endomembrane localization of RABF2B. This Arabidopsis thaliana (Mouse-ear cress) protein is Protein S-acyltransferase 10 (PAT10).